The chain runs to 347 residues: NADH-ubiquinone oxidoreductase chain 2 (347 aa).

The next 11 membrane-spanning stretches (helical) occupy residues 2–22 (LSPL…LVTF), 26–46 (SWIL…PLMA), 60–80 (YFIA…LAAW), 94–114 (IILN…PMHF), 127–147 (TGMI…IQIA), 151–171 (NNAF…WGGL), 179–197 (IIAY…MAPF), 201–223 (ITWV…LNTL), 242–262 (MLLL…GFTN), 274–294 (NLVI…FFYT), and 325–345 (LMTM…AIFI).

This sequence belongs to the complex I subunit 2 family.

The protein localises to the mitochondrion inner membrane. It carries out the reaction a ubiquinone + NADH + 5 H(+)(in) = a ubiquinol + NAD(+) + 4 H(+)(out). Functionally, core subunit of the mitochondrial membrane respiratory chain NADH dehydrogenase (Complex I) that is believed to belong to the minimal assembly required for catalysis. Complex I functions in the transfer of electrons from NADH to the respiratory chain. The immediate electron acceptor for the enzyme is believed to be ubiquinone. The chain is NADH-ubiquinone oxidoreductase chain 2 (MT-ND2) from Lampetra fluviatilis (European river lamprey).